A 284-amino-acid polypeptide reads, in one-letter code: Trimeric intracellular cation channel type B (284 aa).

Topologically, residues M1–S15 are lumenal. Residues M16–A32 traverse the membrane as a helical segment. Residues R33–R44 are Cytoplasmic-facing. Residues S45 to L68 form a helical membrane-spanning segment. Over A69–T79 the chain is Lumenal. Residues T80–L99 traverse the membrane as a helical segment. Residues F100–N102 are Cytoplasmic-facing. A helical transmembrane segment spans residues C103 to R121. Residues K117 and R121 each coordinate a 1,2-diacyl-sn-glycero-3-phospho-(1D-myo-inositol-4,5-bisphosphate). The Lumenal segment spans residues T122–A139. A helical transmembrane segment spans residues M140–I157. Topologically, residues S158–M178 are cytoplasmic. A helical membrane pass occupies residues S179–H196. At G197–R204 the chain is on the lumenal side. The chain crosses the membrane as a helical span at residues H205–T225. Topologically, residues R226 to N284 are cytoplasmic. A disordered region spans residues P250–N284. A compositionally biased stretch (basic and acidic residues) spans D262–N284.

This sequence belongs to the TMEM38 family. Homotrimer; conformation seems to be controled by binding to diacylglycerol (DAG).

The protein localises to the endoplasmic reticulum membrane. It carries out the reaction K(+)(in) = K(+)(out). Its activity is regulated as follows. Channel activity is activated by increased cytosolic Ca(2+) levels and blocked by luminal high Ca(2+) levels. Its function is as follows. Intracellular monovalent cation channel required for maintenance of rapid intracellular calcium release. Acts as a potassium counter-ion channel that functions in synchronization with calcium release from intracellular stores. Activated by increased cytosolic Ca(2+) levels. In Xenopus tropicalis (Western clawed frog), this protein is Trimeric intracellular cation channel type B (tmem38b).